The sequence spans 92 residues: Acylphosphatase (92 aa).

In terms of domain architecture, Acylphosphatase-like spans arginine 5 to tryptophan 92. Active-site residues include arginine 20 and asparagine 38.

It belongs to the acylphosphatase family.

The enzyme catalyses an acyl phosphate + H2O = a carboxylate + phosphate + H(+). This is Acylphosphatase (acyP) from Chloroflexus aurantiacus (strain ATCC 29366 / DSM 635 / J-10-fl).